Reading from the N-terminus, the 439-residue chain is Innexin-19 (439 aa).

The next 4 membrane-spanning stretches (helical) occupy residues 33 to 53 (PLILAVCCLVISAKQYGGTPI), 103 to 123 (QWVPFILIAEALMFSLPCIFW), 199 to 219 (IVYSFTKLLYSVNVVAQFFIL), and 285 to 305 (VFAFLWCWYMILAIITTCSFI).

This sequence belongs to the pannexin family.

It localises to the cell membrane. The protein resides in the cell junction. The protein localises to the gap junction. In terms of biological role, structural component of the gap junctions that specifically coordinates left-right asymmetry in the developing nervous system. Acts by forming gap junction network linking embryonic neurons and providing electrical coupling between cells, leading to promote or inhibit AWC signaling. This is Innexin-19 (inx-19) from Caenorhabditis briggsae.